Here is a 445-residue protein sequence, read N- to C-terminus: Chromosome partition protein MukF (445 aa).

The leucine-zipper stretch occupies residues 213 to 241 (LSETSATLRELQDTLQAAGDELQTQILDI).

This sequence belongs to the MukF family. Interacts, and probably forms a ternary complex, with MukE and MukB via its C-terminal region. The complex formation is stimulated by calcium or magnesium. It is required for an interaction between MukE and MukB.

The protein localises to the cytoplasm. Its subcellular location is the nucleoid. Functionally, involved in chromosome condensation, segregation and cell cycle progression. May participate in facilitating chromosome segregation by condensation DNA from both sides of a centrally located replisome during cell division. Not required for mini-F plasmid partitioning. Probably acts via its interaction with MukB and MukE. Overexpression results in anucleate cells. It has a calcium binding activity. This chain is Chromosome partition protein MukF, found in Vibrio cholerae serotype O1 (strain ATCC 39541 / Classical Ogawa 395 / O395).